Reading from the N-terminus, the 207-residue chain is Octanoyltransferase (207 aa).

A BPL/LPL catalytic domain is found at 27–202 (GETPDELWIV…HLETRLARPQ (176 aa)). Substrate is bound by residues 66-73 (RGGQITYH), 133-135 (SLG), and 146-148 (GLS). C164 serves as the catalytic Acyl-thioester intermediate.

This sequence belongs to the LipB family.

The protein localises to the cytoplasm. It carries out the reaction octanoyl-[ACP] + L-lysyl-[protein] = N(6)-octanoyl-L-lysyl-[protein] + holo-[ACP] + H(+). Its pathway is protein modification; protein lipoylation via endogenous pathway; protein N(6)-(lipoyl)lysine from octanoyl-[acyl-carrier-protein]: step 1/2. Its function is as follows. Catalyzes the transfer of endogenously produced octanoic acid from octanoyl-acyl-carrier-protein onto the lipoyl domains of lipoate-dependent enzymes. Lipoyl-ACP can also act as a substrate although octanoyl-ACP is likely to be the physiological substrate. The protein is Octanoyltransferase of Laribacter hongkongensis (strain HLHK9).